Consider the following 153-residue polypeptide: Small ribosomal subunit protein uS13 (153 aa).

Residues 134 to 153 are disordered; sequence GQRTKSNGRRGRSMGVSRKK.

Belongs to the universal ribosomal protein uS13 family.

It localises to the cytoplasm. Located at the top of the head of the 40S subunit, it contacts several helices of the 18S rRNA. The sequence is that of Small ribosomal subunit protein uS13 (RPS18) from Encephalitozoon cuniculi (strain GB-M1) (Microsporidian parasite).